Reading from the N-terminus, the 906-residue chain is Translation initiation factor IF-2 (906 aa).

Disordered regions lie at residues 94–125 (APEK…PETA), 165–232 (ESEA…TGKK), and 270–321 (RQEQ…SSEV). Composition is skewed to basic and acidic residues over residues 165–176 (ESEAEKGTEIEK), 222–232 (GPAEARETGKK), and 270–284 (RQEQ…KREA). The span at 299–313 (QQRRSLKRGGKRKKY) shows a compositional bias: basic residues. Residues 405–574 (ERPPVITIMG…LLQAEMMELK (170 aa)) enclose the tr-type G domain. Residues 414-421 (GHVDHGKT) form a G1 region. 414–421 (GHVDHGKT) lines the GTP pocket. Residues 439 to 443 (GITQH) form a G2 region. Positions 460 to 463 (DTPG) are G3. GTP-binding positions include 460-464 (DTPGH) and 514-517 (NKMD). The tract at residues 514 to 517 (NKMD) is G4. A G5 region spans residues 550–552 (SAH).

This sequence belongs to the TRAFAC class translation factor GTPase superfamily. Classic translation factor GTPase family. IF-2 subfamily.

It localises to the cytoplasm. Its function is as follows. One of the essential components for the initiation of protein synthesis. Protects formylmethionyl-tRNA from spontaneous hydrolysis and promotes its binding to the 30S ribosomal subunits. Also involved in the hydrolysis of GTP during the formation of the 70S ribosomal complex. This chain is Translation initiation factor IF-2, found in Sulfurovum sp. (strain NBC37-1).